We begin with the raw amino-acid sequence, 382 residues long: 8-amino-7-oxononanoate synthase (382 aa).

Substrate is bound by residues Arg21 and His131. The pyridoxal 5'-phosphate site is built by Ser178, His206, and Thr232. Lys235 bears the N6-(pyridoxal phosphate)lysine mark. Position 349 (Thr349) interacts with substrate.

This sequence belongs to the class-II pyridoxal-phosphate-dependent aminotransferase family. BioF subfamily. As to quaternary structure, homodimer. It depends on pyridoxal 5'-phosphate as a cofactor.

It catalyses the reaction 6-carboxyhexanoyl-[ACP] + L-alanine + H(+) = (8S)-8-amino-7-oxononanoate + holo-[ACP] + CO2. It participates in cofactor biosynthesis; biotin biosynthesis. Functionally, catalyzes the decarboxylative condensation of pimeloyl-[acyl-carrier protein] and L-alanine to produce 8-amino-7-oxononanoate (AON), [acyl-carrier protein], and carbon dioxide. The polypeptide is 8-amino-7-oxononanoate synthase (Serratia marcescens).